The sequence spans 421 residues: Mannose-1-phosphate guanyltransferase alpha-A (421 aa).

Belongs to the transferase hexapeptide repeat family.

It catalyses the reaction alpha-D-mannose 1-phosphate + GTP + H(+) = GDP-alpha-D-mannose + diphosphate. It functions in the pathway nucleotide-sugar biosynthesis; GDP-alpha-D-mannose biosynthesis; GDP-alpha-D-mannose from alpha-D-mannose 1-phosphate (GTP route): step 1/1. In Xenopus laevis (African clawed frog), this protein is Mannose-1-phosphate guanyltransferase alpha-A (gmppa-a).